A 491-amino-acid chain; its full sequence is MIQPDEPQDFPVKLIDKEQLTPTQIVEQLDKYIIGQKDAKRSVAIALRNRLRRQNVSEELRDEIMPNNIIMIGPTGVGKTEIARRLAKLAKAPFVKVEASKFTEVGYVGRDVESMIRDLVEQAVAMVRSEKTEEVREKAALLVEERLLDILLPPVSGLEESEHVGDEEEAVVVEGDAEVVVEKNLEREINRKSRQKMRERLRDGRMEDRQIELEVSSDGQGGMMQIFGPLGQMEEIGNIMQDLMSGMPKKRKKRRMTIAEARKYLEQEEVQKLIDMDAVVKEALRKVEDSGIVFIDEIDKIAAPTTGAGGKGPDVSREGVQRDLLPIVEGTAVSTKYGVVKTDHVLFIASGAFHVARPSDLIPELQGRFPIRVELKSLTEEDFFLILTQPRNALIKQYRAMLKTEQIDLEFTEEAIREIARTAAKVNETVENIGARRLHTILTNLLEELMFGIPEMVMDGTIDRNIVIDDNQVREKLGKLVADRDLSQYIL.

ATP contacts are provided by residues isoleucine 34, glycine 76–glutamate 81, aspartate 296, glutamate 364, and arginine 436.

It belongs to the ClpX chaperone family. HslU subfamily. A double ring-shaped homohexamer of HslV is capped on each side by a ring-shaped HslU homohexamer. The assembly of the HslU/HslV complex is dependent on binding of ATP.

It is found in the cytoplasm. ATPase subunit of a proteasome-like degradation complex; this subunit has chaperone activity. The binding of ATP and its subsequent hydrolysis by HslU are essential for unfolding of protein substrates subsequently hydrolyzed by HslV. HslU recognizes the N-terminal part of its protein substrates and unfolds these before they are guided to HslV for hydrolysis. This is ATP-dependent protease ATPase subunit HslU from Chlorobaculum tepidum (strain ATCC 49652 / DSM 12025 / NBRC 103806 / TLS) (Chlorobium tepidum).